The sequence spans 376 residues: Queuine tRNA-ribosyltransferase (376 aa).

The active-site Proton acceptor is aspartate 93. Substrate is bound by residues aspartate 93 to phenylalanine 97, aspartate 147, glutamine 190, and glycine 217. The tract at residues glycine 248 to aspartate 254 is RNA binding. Residue aspartate 267 is the Nucleophile of the active site. Zn(2+)-binding residues include cysteine 305, cysteine 307, cysteine 310, and histidine 336.

Belongs to the queuine tRNA-ribosyltransferase family. Homodimer. Within each dimer, one monomer is responsible for RNA recognition and catalysis, while the other monomer binds to the replacement base PreQ1. It depends on Zn(2+) as a cofactor.

The catalysed reaction is 7-aminomethyl-7-carbaguanine + guanosine(34) in tRNA = 7-aminomethyl-7-carbaguanosine(34) in tRNA + guanine. The protein operates within tRNA modification; tRNA-queuosine biosynthesis. In terms of biological role, catalyzes the base-exchange of a guanine (G) residue with the queuine precursor 7-aminomethyl-7-deazaguanine (PreQ1) at position 34 (anticodon wobble position) in tRNAs with GU(N) anticodons (tRNA-Asp, -Asn, -His and -Tyr). Catalysis occurs through a double-displacement mechanism. The nucleophile active site attacks the C1' of nucleotide 34 to detach the guanine base from the RNA, forming a covalent enzyme-RNA intermediate. The proton acceptor active site deprotonates the incoming PreQ1, allowing a nucleophilic attack on the C1' of the ribose to form the product. After dissociation, two additional enzymatic reactions on the tRNA convert PreQ1 to queuine (Q), resulting in the hypermodified nucleoside queuosine (7-(((4,5-cis-dihydroxy-2-cyclopenten-1-yl)amino)methyl)-7-deazaguanosine). The protein is Queuine tRNA-ribosyltransferase of Jannaschia sp. (strain CCS1).